The primary structure comprises 234 residues: MTERPKDIPEDKLVLYVVKATPTSTANTVKPLIVMNELSIDHEIYVVPSPTRDEWFHQINPHKMVPAIESAETRDGKRLNIWESTSCLTYLTDAYDHEGLWKGSDLWERTQVNNWLTLHTAALGATGKYWLYFSAIHPEKIPAVIEKLANNIKVQYDILERRLSEKGQKYIALPDRPTIADVANLPFVTEELALKAGLRLGDWPNLQAWSEKMLARPSVQKALSQKFRPSVMIR.

Positions 15-99 constitute a GST N-terminal domain; that stretch reads LYVVKATPTS…YLTDAYDHEG (85 aa). One can recognise a GST C-terminal domain in the interval 105 to 230; that stretch reads DLWERTQVNN…KALSQKFRPS (126 aa).

It belongs to the GST superfamily.

The enzyme catalyses RX + glutathione = an S-substituted glutathione + a halide anion + H(+). The protein operates within mycotoxin biosynthesis. In terms of biological role, glutathione S-transferase; part of the gene cluster that mediates the biosynthesis of sirodesmin PL, an epipolythiodioxopiperazine (ETP) characterized by a disulfide bridged cyclic dipeptide and that acts as a phytotoxin which is involved in the blackleg didease of canola. SirD catalyzes the O-prenylation of L-tyrosine (L-Tyr) in the presence of dimethylallyl diphosphate (DMAPP) to yield 4-O-dimethylallyl-L-Tyr, and therefore represents probably the first pathway-specific enzyme in the biosynthesis of sirodesmin PL. 4-O-dimethylallyl-L-Tyr, then undergoes condensation with L-Ser in a reaction catalyzed by the non-ribosomal peptide synthase sirP to form the diketopiperazine (DKP) backbone. Further bishydroxylation of the DKP performed by the cytochrome P450 monooxygenase sirC leads to the production of the intermediate phomamide. This step is essential to form the reactive thiol group required for toxicity of sirodesmin PL. The next steps of sirodesmin biosynthesis are not well understood yet, but some predictions could be made from intermediate compounds identification. Phomamide is converted into phomalizarine via oxidation, probably by sirT. Further oxidation, methylation (by sirM or sirN) and reduction steps convert phomalizarine to deacetyl sirodesmin. Finally, acetyltransferase sirH probably acetylates deacetyl sirodesmin to produce sirodesmin PL. In Leptosphaeria maculans (Blackleg fungus), this protein is Glutathione S-transferase sirG.